A 324-amino-acid polypeptide reads, in one-letter code: Probable pectinesterase A (324 aa).

A signal peptide spans 1 to 19 (MHGSLLKLALLSFSLGSSA). Residue Q142 participates in substrate binding. The active-site Proton donor is the D165. Residue D186 is the Nucleophile of the active site. R246 and W248 together coordinate substrate. Residue N285 is glycosylated (N-linked (GlcNAc...) asparagine).

It belongs to the pectinesterase family.

The protein localises to the secreted. The catalysed reaction is [(1-&gt;4)-alpha-D-galacturonosyl methyl ester](n) + n H2O = [(1-&gt;4)-alpha-D-galacturonosyl](n) + n methanol + n H(+). It participates in glycan metabolism; pectin degradation; 2-dehydro-3-deoxy-D-gluconate from pectin: step 1/5. Involved in maceration and soft-rotting of plant tissue. This Aspergillus oryzae (strain ATCC 42149 / RIB 40) (Yellow koji mold) protein is Probable pectinesterase A (pmeA).